The chain runs to 447 residues: Phosphoglucosamine mutase (447 aa).

Residue serine 100 is the Phosphoserine intermediate of the active site. Positions 100, 239, 241, and 243 each coordinate Mg(2+). Serine 100 carries the phosphoserine modification.

The protein belongs to the phosphohexose mutase family. The cofactor is Mg(2+). Activated by phosphorylation.

It carries out the reaction alpha-D-glucosamine 1-phosphate = D-glucosamine 6-phosphate. In terms of biological role, catalyzes the conversion of glucosamine-6-phosphate to glucosamine-1-phosphate. The chain is Phosphoglucosamine mutase from Thermoanaerobacter pseudethanolicus (strain ATCC 33223 / 39E) (Clostridium thermohydrosulfuricum).